The primary structure comprises 466 residues: Adenylosuccinate lyase (466 aa).

Substrate contacts are provided by residues 21-22, 97-99, and 130-131; these read RY, NHD, and TS. H180 serves as the catalytic Proton donor/acceptor. A substrate-binding site is contributed by Q259. The Proton donor/acceptor role is filled by S307. Residues R347, S352, and R356 each coordinate substrate.

The protein belongs to the lyase 1 family. Adenylosuccinate lyase subfamily. Homotetramer. Residues from neighboring subunits contribute catalytic and substrate-binding residues to each active site.

The catalysed reaction is N(6)-(1,2-dicarboxyethyl)-AMP = fumarate + AMP. It carries out the reaction (2S)-2-[5-amino-1-(5-phospho-beta-D-ribosyl)imidazole-4-carboxamido]succinate = 5-amino-1-(5-phospho-beta-D-ribosyl)imidazole-4-carboxamide + fumarate. The protein operates within purine metabolism; AMP biosynthesis via de novo pathway; AMP from IMP: step 2/2. Its pathway is purine metabolism; IMP biosynthesis via de novo pathway; 5-amino-1-(5-phospho-D-ribosyl)imidazole-4-carboxamide from 5-amino-1-(5-phospho-D-ribosyl)imidazole-4-carboxylate: step 2/2. In Dictyostelium discoideum (Social amoeba), this protein is Adenylosuccinate lyase (purB).